The sequence spans 277 residues: MQMESQRRDVFYVSDGTAITCETLGHVVLGQFAVQPNEKTFPFVESDEKLSELLKQIQRSYQLHGVKPLVFFSMVIPEMRTRLLQAPAHFYDVLESIVQRVSLDIEMEPAPKLQRSRSVGKDSDTYFDRIAAIEYTLAHDDGVSLKDLDRADIILLGVSRSGKTPTSLYMAMQFGLRVVNYPFIAEDMHAMRLLPEFEFHRHKLFGLTINAERLTEIRENRLAGSEYASNQQCQQELATVEALFRREAISYINTSSLSVEEISTRILERTGLKRRLF.

157-164 provides a ligand contact to ADP; sequence GVSRSGKT.

It belongs to the pyruvate, phosphate/water dikinase regulatory protein family. PSRP subfamily.

The catalysed reaction is [pyruvate, water dikinase] + ADP = [pyruvate, water dikinase]-phosphate + AMP + H(+). It carries out the reaction [pyruvate, water dikinase]-phosphate + phosphate + H(+) = [pyruvate, water dikinase] + diphosphate. In terms of biological role, bifunctional serine/threonine kinase and phosphorylase involved in the regulation of the phosphoenolpyruvate synthase (PEPS) by catalyzing its phosphorylation/dephosphorylation. This Vibrio cholerae serotype O1 (strain ATCC 39541 / Classical Ogawa 395 / O395) protein is Putative phosphoenolpyruvate synthase regulatory protein.